Consider the following 881-residue polypeptide: Band 4.1-like protein 1 (881 aa).

Methionine 1 carries the post-translational modification N-acetylmethionine. The tract at residues 1–88 is disordered; sequence MTTETGPDSE…TPSKAQKSPQ (88 aa). Low complexity predominate over residues 17-35; it reads EAPQQPEAAAAVTTPVTPA. Phosphothreonine is present on threonine 30. Over residues 38–50 the composition is skewed to basic and acidic residues; that stretch reads GHPEANSNEKHPS. Residue serine 75 is modified to Phosphoserine. Polar residues predominate over residues 76-87; it reads ERTTPSKAQKSP. A Phosphothreonine modification is found at threonine 79. In terms of domain architecture, FERM spans 97–378; that stretch reads AICRVTLLDA…EHHTFFRLVS (282 aa). Tyrosine 343 carries the phosphotyrosine modification. A phosphoserine mark is found at serine 378, serine 430, and serine 437. The disordered stretch occupies residues 428-501; the sequence is SRSLDGAEFS…HKQEFLDKPE (74 aa). A compositionally biased stretch (basic and acidic residues) spans 444–457; it reads ENHDAGPDGDKRDE. Residues serine 461 and serine 466 each carry the phosphoserine modification. A compositionally biased stretch (basic and acidic residues) spans 466 to 501; it reads SEAEEGEVRTPTKIKELKPEQETTPRHKQEFLDKPE. Phosphothreonine is present on threonine 475. The tract at residues 483-541 is spectrin--actin-binding; it reads KPEQETTPRHKQEFLDKPEDVLLKHQASINELKRTLKEPNSKLIHRDRDWERERRLPSS. Residue serine 510 is modified to Phosphoserine. Residues 514–538 are compositionally biased toward basic and acidic residues; the sequence is LKRTLKEPNSKLIHRDRDWERERRL. Residues 514-596 form a disordered region; it reads LKRTLKEPNS…QERDTVFLKD (83 aa). Residues serine 540, serine 541, serine 544, and serine 546 each carry the phosphoserine modification. Threonine 550 bears the Phosphothreonine mark. Residues 550 to 577 are compositionally biased toward basic and acidic residues; the sequence is TPEKANERAGLREGSEEKVKPPRPRAPE. Phosphoserine occurs at positions 564 and 578. Threonine 580 bears the Phosphothreonine mark. A phosphoserine mark is found at serine 639, serine 648, serine 650, serine 667, serine 672, serine 678, and serine 685. The disordered stretch occupies residues 642–699; that stretch reads ELDRDKSDSDTEGLLFSRDLNKGAPSQDDESGGIEDSPDRGACSTPDMPQFEPVKTET. Residue threonine 686 is modified to Phosphothreonine. 3 positions are modified to phosphoserine: serine 722, serine 784, and serine 870. Residues 746 to 881 are C-terminal (CTD); that stretch reads SITTETISTT…EERDKKPQES (136 aa).

As to quaternary structure, interacts with AGAP2. As to expression, highest expression in brain, lower in heart, kidney, pancreas, placenta, lung and skeletal muscle.

Its subcellular location is the cytoplasm. It localises to the cytoskeleton. In terms of biological role, may function to confer stability and plasticity to neuronal membrane via multiple interactions, including the spectrin-actin-based cytoskeleton, integral membrane channels and membrane-associated guanylate kinases. The polypeptide is Band 4.1-like protein 1 (Homo sapiens (Human)).